We begin with the raw amino-acid sequence, 388 residues long: MKIHEYQGKEILRKFGVAVPRGKPAFSVDEAVKVAEELGGPVWVVKAQIHAGGRGKGGGVKVAKSLEQVREYANQILGMQLVTHQTGPEGQKVNRLLIEEGADIKQELYVSLVVDRISQKIVLMGSSEGGMDIEEVAEKHPELIHKVIVEPSTGLLDSQADDLATKIGVPAASIPQARAILQGLYKAFWETDASLAEINPLNVSGDGKVVALDAKFNFDSNALFRHPEIVAYRDLDEEDPAEIEASKFDLAYISLDGNIGCLVNGAGLAMATMDTIKLFGGEPANFLDVGGGATTEKVTEAFKLMLKNPGLKAILVNIFGGIMRCDVIAEGVIAGSKAVNLNVPLVVRMKGTNEDLGKKMLADSGLPIISADSMEEAAQKVVAAAAGK.

In terms of domain architecture, ATP-grasp spans 9–244 (KEILRKFGVA…LDEEDPAEIE (236 aa)). ATP is bound by residues lysine 46, 53–55 (GRG), glutamate 99, alanine 102, and glutamate 107. Residues asparagine 199 and aspartate 213 each coordinate Mg(2+). Substrate-binding positions include asparagine 264 and 321–323 (GIM).

The protein belongs to the succinate/malate CoA ligase beta subunit family. Heterotetramer of two alpha and two beta subunits. Requires Mg(2+) as cofactor.

The enzyme catalyses succinate + ATP + CoA = succinyl-CoA + ADP + phosphate. It carries out the reaction GTP + succinate + CoA = succinyl-CoA + GDP + phosphate. Its pathway is carbohydrate metabolism; tricarboxylic acid cycle; succinate from succinyl-CoA (ligase route): step 1/1. In terms of biological role, succinyl-CoA synthetase functions in the citric acid cycle (TCA), coupling the hydrolysis of succinyl-CoA to the synthesis of either ATP or GTP and thus represents the only step of substrate-level phosphorylation in the TCA. The beta subunit provides nucleotide specificity of the enzyme and binds the substrate succinate, while the binding sites for coenzyme A and phosphate are found in the alpha subunit. The chain is Succinate--CoA ligase [ADP-forming] subunit beta from Burkholderia multivorans (strain ATCC 17616 / 249).